A 206-amino-acid polypeptide reads, in one-letter code: Nucleoside triphosphate pyrophosphatase (206 aa).

Residue Asp76 is the Proton acceptor of the active site.

Belongs to the Maf family. A divalent metal cation is required as a cofactor.

It is found in the cytoplasm. It catalyses the reaction a ribonucleoside 5'-triphosphate + H2O = a ribonucleoside 5'-phosphate + diphosphate + H(+). It carries out the reaction a 2'-deoxyribonucleoside 5'-triphosphate + H2O = a 2'-deoxyribonucleoside 5'-phosphate + diphosphate + H(+). Functionally, nucleoside triphosphate pyrophosphatase. May have a dual role in cell division arrest and in preventing the incorporation of modified nucleotides into cellular nucleic acids. The protein is Nucleoside triphosphate pyrophosphatase of Streptomyces coelicolor (strain ATCC BAA-471 / A3(2) / M145).